Consider the following 569-residue polypeptide: Methionine--tRNA ligase (569 aa).

Positions 11–21 (PYINGIKHLGN) match the 'HIGH' region motif. The Zn(2+) site is built by Cys143, Cys146, Cys156, and Cys159. Positions 342-346 (KFSTS) match the 'KMSKS' region motif. Residue Thr345 participates in ATP binding.

This sequence belongs to the class-I aminoacyl-tRNA synthetase family. MetG type 1 subfamily. As to quaternary structure, monomer. The cofactor is Zn(2+).

The protein localises to the cytoplasm. It catalyses the reaction tRNA(Met) + L-methionine + ATP = L-methionyl-tRNA(Met) + AMP + diphosphate. Its function is as follows. Is required not only for elongation of protein synthesis but also for the initiation of all mRNA translation through initiator tRNA(fMet) aminoacylation. The polypeptide is Methionine--tRNA ligase (Caulobacter vibrioides (strain ATCC 19089 / CIP 103742 / CB 15) (Caulobacter crescentus)).